Here is a 379-residue protein sequence, read N- to C-terminus: UDP-4-amino-4-deoxy-L-arabinose--oxoglutarate aminotransferase (379 aa).

Residue lysine 182 is modified to N6-(pyridoxal phosphate)lysine.

This sequence belongs to the DegT/DnrJ/EryC1 family. ArnB subfamily. As to quaternary structure, homodimer. Pyridoxal 5'-phosphate is required as a cofactor.

The enzyme catalyses UDP-4-amino-4-deoxy-beta-L-arabinose + 2-oxoglutarate = UDP-beta-L-threo-pentopyranos-4-ulose + L-glutamate. It participates in nucleotide-sugar biosynthesis; UDP-4-deoxy-4-formamido-beta-L-arabinose biosynthesis; UDP-4-deoxy-4-formamido-beta-L-arabinose from UDP-alpha-D-glucuronate: step 2/3. It functions in the pathway bacterial outer membrane biogenesis; lipopolysaccharide biosynthesis. Catalyzes the conversion of UDP-4-keto-arabinose (UDP-Ara4O) to UDP-4-amino-4-deoxy-L-arabinose (UDP-L-Ara4N). The modified arabinose is attached to lipid A and is required for resistance to polymyxin and cationic antimicrobial peptides. The chain is UDP-4-amino-4-deoxy-L-arabinose--oxoglutarate aminotransferase from Escherichia coli O8 (strain IAI1).